Reading from the N-terminus, the 370-residue chain is tRNA-specific 2-thiouridylase MnmA (370 aa).

ATP-binding positions include 19 to 26 (AMSGGVDS) and L45. The active-site Nucleophile is the C113. A disulfide bridge connects residues C113 and C209. G137 is a binding site for ATP. The interaction with tRNA stretch occupies residues 159-161 (RDQ). Catalysis depends on C209, which acts as the Cysteine persulfide intermediate.

Belongs to the MnmA/TRMU family.

The protein resides in the cytoplasm. It carries out the reaction S-sulfanyl-L-cysteinyl-[protein] + uridine(34) in tRNA + AH2 + ATP = 2-thiouridine(34) in tRNA + L-cysteinyl-[protein] + A + AMP + diphosphate + H(+). Catalyzes the 2-thiolation of uridine at the wobble position (U34) of tRNA, leading to the formation of s(2)U34. The chain is tRNA-specific 2-thiouridylase MnmA from Zymomonas mobilis subsp. mobilis (strain ATCC 31821 / ZM4 / CP4).